Consider the following 417-residue polypeptide: Phosphoglycerate kinase 1 (417 aa).

Position 2 is an N-acetylserine (serine 2). Residues serine 2 and serine 4 each carry the phosphoserine modification. The residue at position 6 (lysine 6) is an N6-succinyllysine. Lysine 11 bears the N6-acetyllysine mark. (2R)-3-phosphoglycerate is bound by residues valine 23, aspartate 24, phenylalanine 25, asparagine 26, glutamine 38, and arginine 39. The tract at residues 38-43 (QRIKAA) is mitochondrial targeting region exposed following cis-trans isomerization by PIN1 and recognized by the TOM complex for mitochondrial translocation of the protein. Position 48 is an N6-acetyllysine; alternate (lysine 48). The residue at position 48 (lysine 48) is an N6-succinyllysine; alternate. (2R)-3-phosphoglycerate-binding residues include serine 62, histidine 63, glycine 65, and arginine 66. The residue at position 75 (lysine 75) is an N6-acetyllysine. Position 76 is a phosphotyrosine (tyrosine 76). An N6-acetyllysine mark is found at lysine 86 and lysine 91. Position 97 is an N6-acetyllysine; alternate (lysine 97). Position 97 is an N6-(2-hydroxyisobutyryl)lysine; alternate (lysine 97). Positions 122 and 123 each coordinate (2R)-3-phosphoglycerate. Position 131 is an N6-acetyllysine; alternate (lysine 131). An N6-malonyllysine; alternate modification is found at lysine 131. N6-acetyllysine is present on lysine 146. (2R)-3-phosphoglycerate contacts are provided by histidine 170 and arginine 171. At lysine 191 the chain carries N6-succinyllysine. A Phosphotyrosine modification is found at tyrosine 196. Lysine 199 carries the post-translational modification N6-acetyllysine. A Phosphoserine modification is found at serine 203. Residue glycine 214 participates in ADP binding. Glycine 214 contributes to the CDP binding site. 2 residues coordinate AMP: alanine 215 and lysine 216. Residue alanine 215 participates in ATP binding. Alanine 215 serves as a coordination point for Mg(2+). Lysine 216 carries the post-translational modification N6-(2-hydroxyisobutyryl)lysine. Residues alanine 218 and aspartate 219 each coordinate Mg(2+). Aspartate 219 lines the CDP pocket. Lysine 220 contacts AMP. Residue lysine 220 participates in ATP binding. Residue lysine 220 is modified to N6-(2-hydroxyisobutyryl)lysine. Glycine 238 is an ADP binding site. Glycine 238 contributes to the CDP binding site. Residue glycine 239 coordinates AMP. Glycine 239 contacts ATP. Lysine 267 and lysine 291 each carry N6-acetyllysine. Residue glycine 313 coordinates AMP. Glycine 313 serves as a coordination point for ATP. At lysine 323 the chain carries N6-(2-hydroxyisobutyryl)lysine. Glycine 338, valine 340, and phenylalanine 343 together coordinate CDP. Phenylalanine 343 lines the ADP pocket. Glutamate 344 is a binding site for AMP. Residue glutamate 344 participates in ATP binding. An N6-acetyllysine modification is found at lysine 361. 2 residues coordinate ATP: aspartate 375 and threonine 376. Aspartate 375 contributes to the Mg(2+) binding site.

Belongs to the phosphoglycerate kinase family. In terms of assembly, monomer. Interacts with kinase MAPK1/ERK2; the interaction is direct, occurs under hypoxic conditions, and promotes its interaction with PIN1. Interacts with peptidyl-prolyl cis-trans isomerase PIN1; the interaction is direct, occurs under hypoxic conditions, and targets the protein to the mitochondrion by promoting interactions with the TOM complex. Interacts with mitochondrial circRNA mcPGK1 (via its 2nd stem-loop); the interaction is direct and targets the protein to the mitochondrion by promoting interactions with the TOM complex. Interacts with pyruvate dehydrogenase kinase PDK1; the interaction is direct, occurs under hypoxic conditions and leads to PDK1-mediated inhibition of pyruvate dehydrogenase complex activity. Mg(2+) serves as cofactor. Post-translationally, phosphorylated at Ser-203 by MAPK1/ERK2 under hypoxic conditions, which promotes its mitochondrial targeting.

The protein resides in the cytoplasm. The protein localises to the cytosol. It localises to the mitochondrion matrix. It catalyses the reaction (2R)-3-phosphoglycerate + ATP = (2R)-3-phospho-glyceroyl phosphate + ADP. The enzyme catalyses L-seryl-[protein] + ATP = O-phospho-L-seryl-[protein] + ADP + H(+). It participates in carbohydrate degradation; glycolysis; pyruvate from D-glyceraldehyde 3-phosphate: step 2/5. Functionally, catalyzes one of the two ATP producing reactions in the glycolytic pathway via the reversible conversion of 1,3-diphosphoglycerate to 3-phosphoglycerate. Both L- and D- forms of purine and pyrimidine nucleotides can be used as substrates, but the activity is much lower on pyrimidines. In addition to its role as a glycolytic enzyme, it seems that PGK-1 acts as a polymerase alpha cofactor protein (primer recognition protein). Acts as a protein kinase when localized to the mitochondrion where it phosphorylates pyruvate dehydrogenase kinase PDK1 to inhibit pyruvate dehydrogenase complex activity and suppress the formation of acetyl-coenzyme A from pyruvate, and consequently inhibit oxidative phosphorylation and promote glycolysis. May play a role in sperm motility. The polypeptide is Phosphoglycerate kinase 1 (PGK1) (Cricetulus griseus (Chinese hamster)).